The sequence spans 126 residues: uncharacterized protein (126 aa).

This is an uncharacterized protein from Rickettsia prowazekii (strain Madrid E).